Reading from the N-terminus, the 1042-residue chain is Carbamoyl phosphate synthase large chain (1042 aa).

Residues 1–417 (MTEDSRTILL…SLLKALRSSE (417 aa)) are carboxyphosphate synthetic domain. Arg127, Arg182, Gly188, Gly189, Glu221, Ile223, Glu228, Gly254, Ile255, His256, Gln297, and Glu314 together coordinate ATP. The region spanning 131 to 343 (RQRMADLGQP…IARVTAKVAL (213 aa)) is the ATP-grasp 1 domain. Mg(2+) contacts are provided by Gln297, Glu314, and Asn316. The Mn(2+) site is built by Gln297, Glu314, and Asn316. Residues 418–558 (YDPSVDWATV…SQGSTGSDVR (141 aa)) are oligomerization domain. Positions 559–947 (ADRDAHSVVI…WKAQVAASNA (389 aa)) are carbamoyl phosphate synthetic domain. The ATP-grasp 2 domain occupies 689–880 (NRLLDERDIS…IAKLAAKVMA (192 aa)). Positions 725, 764, 766, 771, 796, 797, 798, 799, 839, and 851 each coordinate ATP. Residues Gln839, Glu851, and Asn853 each coordinate Mg(2+). Mn(2+)-binding residues include Gln839, Glu851, and Asn853. In terms of domain architecture, MGS-like spans 947–1042 (APVPGSTAVV…DRPVNDETWG (96 aa)). Residues 948–1042 (PVPGSTAVVD…DRPVNDETWG (95 aa)) form an allosteric domain region.

Belongs to the CarB family. Composed of two chains; the small (or glutamine) chain promotes the hydrolysis of glutamine to ammonia, which is used by the large (or ammonia) chain to synthesize carbamoyl phosphate. Tetramer of heterodimers (alpha,beta)4. Mg(2+) is required as a cofactor. Mn(2+) serves as cofactor.

It catalyses the reaction hydrogencarbonate + L-glutamine + 2 ATP + H2O = carbamoyl phosphate + L-glutamate + 2 ADP + phosphate + 2 H(+). The enzyme catalyses hydrogencarbonate + NH4(+) + 2 ATP = carbamoyl phosphate + 2 ADP + phosphate + 2 H(+). Its pathway is amino-acid biosynthesis; L-arginine biosynthesis; carbamoyl phosphate from bicarbonate: step 1/1. The protein operates within pyrimidine metabolism; UMP biosynthesis via de novo pathway; (S)-dihydroorotate from bicarbonate: step 1/3. Functionally, large subunit of the glutamine-dependent carbamoyl phosphate synthetase (CPSase). CPSase catalyzes the formation of carbamoyl phosphate from the ammonia moiety of glutamine, carbonate, and phosphate donated by ATP, constituting the first step of 2 biosynthetic pathways, one leading to arginine and/or urea and the other to pyrimidine nucleotides. The large subunit (synthetase) binds the substrates ammonia (free or transferred from glutamine from the small subunit), hydrogencarbonate and ATP and carries out an ATP-coupled ligase reaction, activating hydrogencarbonate by forming carboxy phosphate which reacts with ammonia to form carbamoyl phosphate. The sequence is that of Carbamoyl phosphate synthase large chain from Halobacterium salinarum (strain ATCC 700922 / JCM 11081 / NRC-1) (Halobacterium halobium).